A 362-amino-acid polypeptide reads, in one-letter code: MNAPKKLPADVAEELATTAQKLVQAGKGILAADESTQTIKKRFDNIKLENTIENRASYRDLLFGTKGLGKFISGAILFEETLFQKNEAGVPMVNLLHNENIIPGIKVDKGLVNIPCTDEEKSTQGLDGLAERCKEYYKAGARFAKWRTVLVIDTAKGKPTDLSNHETAWGLARYASICQQNRLVPIVEPEILADGPHSIEVCAVVTQKVLSCVFKALQENGVLLEGALLKPNMVTAGYECTAKTTTQDVGFLTVRTLRRTVPPALPGVVFLSGGQSEEEASVNLNSINALGPHPWALTFSYGRALQASVLNTWQGKKENVAKAREVLLQRAEANSLATYGKYKGGAGGENAGASLYEKKYVY.

Asp33 lines the dihydroxyacetone phosphate pocket. D-glyceraldehyde 3-phosphate-binding residues include Ser35 and Thr38. A beta-D-fructose 1,6-bisphosphate-binding site is contributed by Arg42. Lys106 contributes to the D-glyceraldehyde 3-phosphate binding site. Dihydroxyacetone phosphate is bound at residue Lys145. Glu188 is a binding site for D-glyceraldehyde 3-phosphate. Catalysis depends on Glu188, which acts as the Proton acceptor. Dihydroxyacetone phosphate-binding residues include Lys230, Ser272, and Gly273. Catalysis depends on Lys230, which acts as the Schiff-base intermediate with dihydroxyacetone phosphate. Residues 272-274 (SGG) and Ser300 contribute to the beta-D-fructose 1,6-bisphosphate site. The dihydroxyacetone phosphate site is built by Gly302 and Arg303. Arg303 provides a ligand contact to beta-D-fructose 1,6-bisphosphate.

Belongs to the class I fructose-bisphosphate aldolase family. Homotetramer. Interacts with TRAP (via cytoplasmic domain); the interaction prevents substrate binding and thereby inhibits aldolase activity. Interacts with MTRAP (via cytoplasmic domain); MTRAP phosphorylation may increase the binding to FBPA. Interact with RH1 (via cytoplasmic domain). Interacts with RH2b (via cytoplasmic domain). Interacts with RH4 (via cytoplasmic domain). Interacts with AMA1 (via cytoplasmic domain); the interaction is weak, however it may be increased upon AMA1 phosphorylation. Interacts with EBA140 (via cytoplasmic domain); the interaction is weak. Interacts with EBA175 (via cytoplasmic domain); the interaction is weak. Interacts with EBA181 (via cytoplasmic domain); the interaction is weak. Interacts with G-actin and F-actin. May interact with ACT2/actin II; the interaction inhibits FBPA catalytic activity. Interacts with human SLC4A1/band 3 (via N-terminus); the interaction inhibits FBPA catalytic activity.

It is found in the cytoplasm. The protein localises to the membrane. Its subcellular location is the host cell membrane. It carries out the reaction beta-D-fructose 1,6-bisphosphate = D-glyceraldehyde 3-phosphate + dihydroxyacetone phosphate. The protein operates within carbohydrate degradation; glycolysis; D-glyceraldehyde 3-phosphate and glycerone phosphate from D-glucose: step 4/4. Its activity is regulated as follows. The cytoplasmic tail of TRAP and probably other adhesins acts as a competitive inhibitor as the binding sites of the glycolytic substrate fructose 1,6-bisphosphate and TRAP partially overlap. Inhibited by suramin, an antiparasitic drug used to treat Trypanosome-mediated infection. In terms of biological role, plays a key role in glycolysis by catalyzing the cleavage of fructose 1,6-bisphosphate into dihydroxyacetone phosphate and glyceraldehyde 3-phosphate. Independently of its catalytic activity, connects the actin filaments, and thus the actomyosin motor, to cell surface adhesins of the thrombospondin-related anonymous protein (TRAP), the erythrocyte binding ligand (EBL) and reticulocyte binding homolog (RH) protein families; this interaction is probably involved in transducing the motor force across the parasite surface required for sporozoite and ookinete gliding motility and merozoite invasion. Stimulates actin polymerisation. The sequence is that of Fructose-bisphosphate aldolase from Plasmodium falciparum (isolate K1 / Thailand).